We begin with the raw amino-acid sequence, 161 residues long: V-type proton ATPase 16 kDa proteolipid subunit c (161 aa).

The Lumenal segment spans residues 1–15 (MSYDLATAERAAYAP). The helical transmembrane segment at 16–36 (FFGYMGAASAQIFTVLGAAYG) threads the bilayer. The Cytoplasmic portion of the chain corresponds to 37–58 (TAKSAVGISSMGVMRPELIMKS). A helical transmembrane segment spans residues 59 to 79 (VIPVIMAGIIGIYGLVVAMVL). Topologically, residues 80-98 (RGKVTSASAGYTLDKGFAH) are lumenal. The helical transmembrane segment at 99–119 (LAAGLTCGLCGLGAGYAIGIV) threads the bilayer. Residues 120 to 137 (GDAGVRGTAQQPRLFVGM) lie on the Cytoplasmic side of the membrane. Residues 138–158 (ILILIFSEVLGLYGMIVALIL) traverse the membrane as a helical segment. At 159 to 161 (GTS) the chain is on the lumenal side.

This sequence belongs to the V-ATPase proteolipid subunit family. V-ATPase is a heteromultimeric enzyme made up of two complexes: the ATP-hydrolytic V1 complex and the proton translocation V0 complex. The V1 complex consists of three catalytic AB heterodimers that form a heterohexamer, three peripheral stalks each consisting of EG heterodimers, one central rotor including subunits D and F, and the regulatory subunits C and H. The proton translocation complex V0 consists of the proton transport subunit a, a ring of proteolipid subunits c9c'', rotary subunit d, subunits e and f, and the accessory subunits vah-19/Ac45 and vah-20/PRR.

The protein resides in the membrane. Its function is as follows. Proton-conducting pore forming subunit of the V0 complex of vacuolar(H+)-ATPase (V-ATPase), a multisubunit enzyme composed of a peripheral complex (V1) that hydrolyzes ATP and a membrane integral complex (V0) that translocates protons. V-ATPase is responsible for acidifying and maintaining the pH of intracellular compartments and in some cell types, is targeted to the plasma membrane, where it is responsible for acidifying the extracellular environment. The sequence is that of V-type proton ATPase 16 kDa proteolipid subunit c (12) from Ascaris suum (Pig roundworm).